We begin with the raw amino-acid sequence, 562 residues long: NAD-dependent malic enzyme (562 aa).

Tyrosine 101 functions as the Proton donor in the catalytic mechanism. Arginine 154 contributes to the NAD(+) binding site. Lysine 172 (proton acceptor) is an active-site residue. A divalent metal cation is bound by residues glutamate 243, aspartate 244, and aspartate 267. Positions 267 and 415 each coordinate NAD(+).

The protein belongs to the malic enzymes family. Homotetramer. Mg(2+) is required as a cofactor. Requires Mn(2+) as cofactor.

It catalyses the reaction (S)-malate + NAD(+) = pyruvate + CO2 + NADH. It carries out the reaction oxaloacetate + H(+) = pyruvate + CO2. In Aliivibrio fischeri (strain ATCC 700601 / ES114) (Vibrio fischeri), this protein is NAD-dependent malic enzyme.